The sequence spans 445 residues: Acyl-lipid (7-3)-desaturase (445 aa).

The Cytochrome b5 heme-binding domain occupies 11–91 (VAELRAAEVA…MSKFFVGSLD (81 aa)). Heme contacts are provided by histidine 50 and histidine 73. 2 consecutive transmembrane segments (helical) span residues 126 to 146 (YWLK…YMLL) and 148 to 168 (GKTL…GLNI). The short motif at 170-174 (HDANH) is the Histidine box-1 element. Residues 205-210 (HVVMHH) carry the Histidine box-2 motif. The next 3 membrane-spanning stretches (helical) occupy residues 247 to 267 (ILPG…LELL), 283 to 303 (LFAP…ALPL), and 312 to 332 (ALCI…FFFI). The Histidine box-3 motif lies at 380 to 384 (QIEHH).

This sequence belongs to the fatty acid desaturase type 1 family. Fe(2+) serves as cofactor.

The protein resides in the membrane. The catalysed reaction is a (7Z,10Z,13Z,16Z,19Z)-docosapentaenoyl-containing glycerolipid + 2 Fe(II)-[cytochrome b5] + O2 + 2 H(+) = a (4Z,7Z,10Z,13Z,16Z,19Z)-docosahexaenoyl-containing glycerolipid + 2 Fe(III)-[cytochrome b5] + 2 H2O. It catalyses the reaction a (7Z,10Z,13Z,16Z)-docosatetraenoyl-containing glycerolipid + 2 Fe(II)-[cytochrome b5] + O2 + 2 H(+) = a (4Z,7Z,10Z,13Z,16Z)-docosapentaenoyl-containing glycerolipid + 2 Fe(III)-[cytochrome b5] + 2 H2O. Functionally, fatty acid desaturase that introduces a cis double bond at the 4-position in 22-carbon polyunsaturated fatty acids that contain a Delta(7) double bond, resulting in the production of delta-4 desaturated fatty acid docosahexanoic acid (DHA). Mediates desaturation of 22:5n-3 and 22:4n-6 into 22:6n-3 and 22:5n-6 respectively. The polypeptide is Acyl-lipid (7-3)-desaturase (Diacronema lutheri (Unicellular marine alga)).